Reading from the N-terminus, the 84-residue chain is Cytochrome b559 subunit alpha (84 aa).

Residues 21-35 (VIHSITIPSLFIAGW) form a helical membrane-spanning segment. His23 lines the heme pocket.

The protein belongs to the PsbE/PsbF family. Heterodimer of an alpha subunit and a beta subunit. PSII is composed of 1 copy each of membrane proteins PsbA, PsbB, PsbC, PsbD, PsbE, PsbF, PsbH, PsbI, PsbJ, PsbK, PsbL, PsbM, PsbT, PsbX, PsbY, PsbZ, Psb30/Ycf12, at least 3 peripheral proteins of the oxygen-evolving complex and a large number of cofactors. It forms dimeric complexes. Heme b serves as cofactor.

It is found in the plastid membrane. Functionally, this b-type cytochrome is tightly associated with the reaction center of photosystem II (PSII). PSII is a light-driven water:plastoquinone oxidoreductase that uses light energy to abstract electrons from H(2)O, generating O(2) and a proton gradient subsequently used for ATP formation. It consists of a core antenna complex that captures photons, and an electron transfer chain that converts photonic excitation into a charge separation. This Cuscuta gronovii (Common dodder) protein is Cytochrome b559 subunit alpha.